A 590-amino-acid polypeptide reads, in one-letter code: MQRALSSTSRASVLSSAPTRAPVSRFRSAGLSLQQQRFAHKELKFGVEGRAALLKGIDTLAKAVCTTLGPKGRNVLIESSYGSPKITKDGVTVAKAVTLQDKFENLGARLLQDVASKTNEVAGDGTTTATVLARAIFSETVKNVAAGCNPMDLRRGIQAAVEAVVEYLQANKRDITTTEEIAQVATISANGDTHVGKLISNAMEKVGKEGVITVKDGKTIEDELEVTEGMRFDRGYVSPYFITDTKAQKVEFEKPLIVLSEKKISAVQDIIPALEASTTLRRPLVIIAEDIEGEALAVCILNKLRGQLQVAAVKVPGFGDNRKSILGDIGILTNATVFTDELDMKLEKATADMLGSTGSITITKEDTIILNGDGSKDSIAQRCEQIRGVIADPTTSDYEKEKLQERLAKLSGGVAVIKVGGASEVEVGEKKDRVVDALNATRAAVEEGILPGGGTALLKAAANGLASVKPTSSDQLRRISSLVSAITRPARTIVENAGLEGSVIVGKLTDEHASDFNRGFDSAKGEYVDMIASGIVDPLKVVRTALVDASGVASLLGTTEVAIVEAPEEKGPAGPPGGMGGMGGMGGGMF.

The transit peptide at 1 to 43 directs the protein to the mitochondrion; the sequence is MQRALSSTSRASVLSSAPTRAPVSRFRSAGLSLQQQRFAHKEL.

The protein belongs to the chaperonin (HSP60) family.

The protein localises to the mitochondrion. Its function is as follows. May participate in assembly and/or disassembly of proteins imported into the mitochondrion. HSP60 are ATPases and have affinity for unfolded proteins. This Ajellomyces capsulatus (Darling's disease fungus) protein is Heat shock protein 60, mitochondrial (HSP60).